The chain runs to 74 residues: uncharacterized protein (74 aa).

This is an uncharacterized protein from Schizosaccharomyces pombe (strain 972 / ATCC 24843) (Fission yeast).